We begin with the raw amino-acid sequence, 525 residues long: MSLPSSYTALLNDLNRDVARARPADALQFCANWFNSKLEEQRRAHLASNTNFATTNASTPFSHNSVGPSDIVDFGGAAPGLASPTQRASLFHSDPFAPGAGGGALPVASLAVPMDASQSPDSTPAPATPAAPAAPAAPAAPFSSLGGSGSTSISNAAFIPPTFNLGRRTSVSAESMAPSAANAESDGSPLPKTVIPKSEEQMQRIRGSIGNNLLFRNLEQDQYRDVLLAMKEVKVDANVTVIEQGAQGDYFYVVEFGTLDVYVRSPDAVSEGAPSASALLGDKKVSYGPGSSFGELALLYAQPRAATVLSTSACTLWALDRITFRSILMETNSRRRALYEKFLMDVPLFERLSAAERAKISDSLELREYSRGEAVISQGERGSEFFIIVEGDAEVRKTKQGGEEVVGKLSRGDYFGELALLNNAPRAATVAAAGATDDARLRVVTMSERAFTRLLGPLAGILERHAKETYGDEYSAVHANANADAATSVNSAALARSGADTSFPHPMDSSAKPGEGAWSAPNPFA.

Residues 28-213 form a dimerization and phosphorylation region; that stretch reads QFCANWFNSK…RIRGSIGNNL (186 aa). Disordered regions lie at residues 114 to 146 and 170 to 196; these read MDAS…SSLG and SVSA…TVIP. Positions 124–146 are enriched in low complexity; sequence PAPATPAAPAAPAAPAAPFSSLG. At serine 170 the chain carries Phosphoserine; by autocatalysis. Residues 214–345 and 348–472 each bind a nucleoside 3',5'-cyclic phosphate; these read LFRN…FLMD and LFER…TYGD. 3',5'-cyclic AMP-binding residues include glutamate 295, arginine 304, and glutamate 417. Positions 497 to 525 are disordered; sequence SGADTSFPHPMDSSAKPGEGAWSAPNPFA.

Belongs to the cAMP-dependent kinase regulatory chain family. In terms of assembly, tetramer, composed of 2 regulatory (R) and 2 catalytic (C) subunits. In the presence of cAMP it dissociates into 2 active monomeric C subunits and an R dimer.

This chain is cAMP-dependent protein kinase regulatory subunit (PKAR), found in Mycosarcoma maydis (Corn smut fungus).